The following is a 568-amino-acid chain: Small ribosomal subunit protein bS1 (568 aa).

6 consecutive S1 motif domains span residues Lys39–Glu100, Gly118–Arg184, Gly205–Lys273, Gly290–Lys360, Gly377–Lys447, and Gly464–Lys533.

The protein belongs to the bacterial ribosomal protein bS1 family.

In terms of biological role, binds mRNA; thus facilitating recognition of the initiation point. It is needed to translate mRNA with a short Shine-Dalgarno (SD) purine-rich sequence. The sequence is that of Small ribosomal subunit protein bS1 (rpsA) from Rickettsia typhi (strain ATCC VR-144 / Wilmington).